A 920-amino-acid chain; its full sequence is 3-hydroxy-3-methylglutaryl-coenzyme A reductase (920 aa).

Residues 12–32 (FCASHPWEVIVALLTITACML) traverse the membrane as a helical segment. N-linked (GlcNAc...) asparagine glycosylation occurs at asparagine 37. Positions 62-85 (GAGSGASGTIPPSSMGGSATSSRH) are disordered. Positions 71-82 (IPPSSMGGSATS) are enriched in polar residues. Residues 106 to 263 (DVILMTIVRC…MTFYPACLSL (158 aa)) enclose the SSD domain. 5 helical membrane-spanning segments follow: residues 107 to 129 (VILM…CSLH), 136 to 156 (VLGI…TAII), 170 to 190 (LFFL…QLAL), 208 to 228 (LLGP…GVGT), and 237 to 257 (VLCM…MTFY). N-linked (GlcNAc...) asparagine glycosylation is found at asparagine 342 and asparagine 346. Residues 364 to 384 (SADHIVISIVLIALVVKFICF) form a helical membrane-spanning segment. Residues 385–498 (DNRDPLPDQL…EEIVSIVHAG (114 aa)) are linker. N-linked (GlcNAc...) asparagine glycans are attached at residues asparagine 443 and asparagine 475. The tract at residues 499-829 (GTHCPLHKIE…TCTMPSLEVG (331 aa)) is catalytic. Residues glutamate 586, lysine 717, and aspartate 793 each act as charge relay system in the active site. N-linked (GlcNAc...) asparagine glycosylation is found at asparagine 797 and asparagine 802. Catalysis depends on histidine 892, which acts as the Proton donor. N-linked (GlcNAc...) asparagine glycosylation is found at asparagine 896 and asparagine 910.

It belongs to the HMG-CoA reductase family. In terms of tissue distribution, highly expressed in embryonic gonadal mesoderm, where expression is initially broad, and then becomes restricted to a segmental pattern at stage 11. Expression is then further restricted to a cluster of cells in each of parasegments 10, 11 and 12, corresponding to the developing gonadal mesoderm. Not expressed in pole cells.

The protein resides in the endoplasmic reticulum membrane. The catalysed reaction is (R)-mevalonate + 2 NADP(+) + CoA = (3S)-3-hydroxy-3-methylglutaryl-CoA + 2 NADPH + 2 H(+). It participates in metabolic intermediate biosynthesis; (R)-mevalonate biosynthesis; (R)-mevalonate from acetyl-CoA: step 3/3. The activity of HMG-CoA-reductase is suppressed by exogenous mevalonate. Its function is as follows. Synthesis of mevalonate for the production of non-sterol isoprenoids, which are essential for growth differentiation. Provides spatial information during embryogenesis to guide migrating primordial germ cells (the pole cells) from the ectoderm to the mesoderm. Also required for association of the pole cells with the gonadal mesoderm. In Drosophila melanogaster (Fruit fly), this protein is 3-hydroxy-3-methylglutaryl-coenzyme A reductase (Hmgcr).